The sequence spans 515 residues: Fibril protein (515 aa).

Residue Met-1 is modified to Blocked amino end (Met). 4 helical regions span residues Val-21–Val-34, His-206–Leu-228, Lys-357–Cys-376, and Ser-426–Val-440.

Its subcellular location is the cytoplasm. The protein localises to the cytoskeleton. Its function is as follows. Acts as a cytoskeletal structure involved in the shape and motility of spiroplasmas. The chain is Fibril protein from Spiroplasma citri.